We begin with the raw amino-acid sequence, 467 residues long: DEAD-box ATP-dependent RNA helicase CshA (467 aa).

A Q motif motif is present at residues 2 to 30 (TTFQELGLSQEVMKAIERMGFEETTPIQA). Residues 33–203 (IPLSLQNKDV…ERFMNEPELV (171 aa)) enclose the Helicase ATP-binding domain. 46–53 (AQTGTGKT) contacts ATP. Positions 151–154 (DEAD) match the DEAD box motif. The region spanning 214–374 (NIQQYYLEVH…RMKPPTLDEA (161 aa)) is the Helicase C-terminal domain. The disordered stretch occupies residues 428–467 (TTPVQLTEEPPLAVKREKKRGGRPDGSARSRTKKRRITAH). The span at 457 to 467 (SRTKKRRITAH) shows a compositional bias: basic residues.

This sequence belongs to the DEAD box helicase family. CshA subfamily. Oligomerizes, may be a member of the RNA degradosome.

The protein resides in the cytoplasm. The catalysed reaction is ATP + H2O = ADP + phosphate + H(+). DEAD-box RNA helicase possibly involved in RNA degradation. Unwinds dsRNA in both 5'- and 3'-directions, has RNA-dependent ATPase activity. The protein is DEAD-box ATP-dependent RNA helicase CshA of Geobacillus kaustophilus (strain HTA426).